The primary structure comprises 408 residues: Glutamate N-acetyltransferase (408 aa).

Substrate-binding residues include Thr-150, Lys-176, Thr-189, Glu-271, Asn-403, and Thr-408. Thr-189 acts as the Nucleophile in catalysis.

This sequence belongs to the ArgJ family. In terms of assembly, heterotetramer of two alpha and two beta chains.

Its subcellular location is the cytoplasm. The enzyme catalyses N(2)-acetyl-L-ornithine + L-glutamate = N-acetyl-L-glutamate + L-ornithine. Its pathway is amino-acid biosynthesis; L-arginine biosynthesis; L-ornithine and N-acetyl-L-glutamate from L-glutamate and N(2)-acetyl-L-ornithine (cyclic): step 1/1. In terms of biological role, catalyzes the transfer of the acetyl group from N(2)-acetylornithine to glutamate, forming N-acetylglutamate and L-ornithine. The polypeptide is Glutamate N-acetyltransferase (Methanococcus maripaludis (strain C6 / ATCC BAA-1332)).